The chain runs to 163 residues: ATP synthase subunit delta, mitochondrial (163 aa).

The transit peptide at 1–18 (MLARTIQRFSVVAKRGYA) directs the protein to the mitochondrion.

The protein belongs to the ATPase epsilon chain family. As to quaternary structure, subunit of the F-type ATPase which has 2 components, CF(1) - the catalytic core - and CF(0) - the membrane proton channel.

It localises to the mitochondrion. It is found in the mitochondrion inner membrane. Mitochondrial membrane ATP synthase (F(1)F(0) ATP synthase or Complex V) produces ATP from ADP in the presence of a proton gradient across the membrane which is generated by electron transport complexes of the respiratory chain. F-type ATPases consist of two structural domains, F(1) - containing the extramembraneous catalytic core, and F(0) - containing the membrane proton channel, linked together by a central stalk and a peripheral stalk. During catalysis, ATP turnover in the catalytic domain of F(1) is coupled via a rotary mechanism of the central stalk subunits to proton translocation. Part of the complex F(1) domain and of the central stalk which is part of the complex rotary element. The polypeptide is ATP synthase subunit delta, mitochondrial (Caenorhabditis elegans).